The sequence spans 584 residues: Isocitrate dehydrogenase kinase/phosphatase (584 aa).

ATP is bound by residues 315–321 and Lys336; that span reads APGVKGM. Asp371 is an active-site residue.

It belongs to the AceK family.

Its subcellular location is the cytoplasm. It carries out the reaction L-seryl-[isocitrate dehydrogenase] + ATP = O-phospho-L-seryl-[isocitrate dehydrogenase] + ADP + H(+). Bifunctional enzyme which can phosphorylate or dephosphorylate isocitrate dehydrogenase (IDH) on a specific serine residue. This is a regulatory mechanism which enables bacteria to bypass the Krebs cycle via the glyoxylate shunt in response to the source of carbon. When bacteria are grown on glucose, IDH is fully active and unphosphorylated, but when grown on acetate or ethanol, the activity of IDH declines drastically concomitant with its phosphorylation. The chain is Isocitrate dehydrogenase kinase/phosphatase from Serratia proteamaculans (strain 568).